Consider the following 427-residue polypeptide: UDP-N-acetylglucosamine 1-carboxyvinyltransferase (427 aa).

Lys-22–Asn-23 contributes to the phosphoenolpyruvate binding site. A UDP-N-acetyl-alpha-D-glucosamine-binding site is contributed by Arg-99. Cys-123 functions as the Proton donor in the catalytic mechanism. Residue Cys-123 is modified to 2-(S-cysteinyl)pyruvic acid O-phosphothioketal. Residues Arg-128–Leu-132, Asp-313, and Ile-335 contribute to the UDP-N-acetyl-alpha-D-glucosamine site.

The protein belongs to the EPSP synthase family. MurA subfamily.

Its subcellular location is the cytoplasm. The catalysed reaction is phosphoenolpyruvate + UDP-N-acetyl-alpha-D-glucosamine = UDP-N-acetyl-3-O-(1-carboxyvinyl)-alpha-D-glucosamine + phosphate. The protein operates within cell wall biogenesis; peptidoglycan biosynthesis. Functionally, cell wall formation. Adds enolpyruvyl to UDP-N-acetylglucosamine. The protein is UDP-N-acetylglucosamine 1-carboxyvinyltransferase of Sphingopyxis alaskensis (strain DSM 13593 / LMG 18877 / RB2256) (Sphingomonas alaskensis).